A 347-amino-acid polypeptide reads, in one-letter code: Heat-inducible transcription repressor HrcA (347 aa).

The protein belongs to the HrcA family.

Negative regulator of class I heat shock genes (grpE-dnaK-dnaJ and groELS operons). Prevents heat-shock induction of these operons. This is Heat-inducible transcription repressor HrcA from Lactococcus lactis subsp. cremoris (strain SK11).